We begin with the raw amino-acid sequence, 919 residues long: GPI ethanolamine phosphate transferase 1 (919 aa).

Topologically, residues methionine 1–tyrosine 8 are cytoplasmic. Residues phenylalanine 9–phenylalanine 29 traverse the membrane as a helical segment. Over valine 30 to threonine 456 the chain is Lumenal. 5 N-linked (GlcNAc...) asparagine glycosylation sites follow: asparagine 138, asparagine 196, asparagine 201, asparagine 285, and asparagine 311. The helical transmembrane segment at isoleucine 457 to phenylalanine 477 threads the bilayer. At isoleucine 478–lysine 487 the chain is on the cytoplasmic side. A helical transmembrane segment spans residues serine 488–tyrosine 508. At glutamine 509–lysine 510 the chain is on the lumenal side. Residues alanine 511–threonine 531 traverse the membrane as a helical segment. The Cytoplasmic portion of the chain corresponds to aspartate 532–alanine 558. The helical transmembrane segment at isoleucine 559–isoleucine 579 threads the bilayer. Residues phenylalanine 580 to asparagine 598 are Lumenal-facing. The chain crosses the membrane as a helical span at residues threonine 599–isoleucine 619. Position 620 (glutamate 620) is a topological domain, cytoplasmic. Residues serine 621–leucine 641 form a helical membrane-spanning segment. The Lumenal portion of the chain corresponds to histidine 642–threonine 653. The helical transmembrane segment at valine 654–valine 674 threads the bilayer. The Cytoplasmic portion of the chain corresponds to serine 675–alanine 686. The chain crosses the membrane as a helical span at residues glutamine 687 to methionine 707. Residues lysine 708–leucine 718 lie on the Lumenal side of the membrane. Residues isoleucine 719–phenylalanine 739 traverse the membrane as a helical segment. The Cytoplasmic portion of the chain corresponds to tyrosine 740–valine 773. A helical membrane pass occupies residues threonine 774 to isoleucine 794. Over serine 795 to glycine 815 the chain is Lumenal. The chain crosses the membrane as a helical span at residues alanine 816 to leucine 836. The Cytoplasmic segment spans residues asparagine 837–tyrosine 845. The helical transmembrane segment at threonine 846–leucine 866 threads the bilayer. Residues lysine 867–tyrosine 882 lie on the Lumenal side of the membrane. A helical transmembrane segment spans residues cysteine 883–leucine 903. Residues lysine 904–asparagine 919 lie on the Cytoplasmic side of the membrane.

This sequence belongs to the PIGG/PIGN/PIGO family. PIGN subfamily.

The protein localises to the endoplasmic reticulum membrane. It participates in glycolipid biosynthesis; glycosylphosphatidylinositol-anchor biosynthesis. Its function is as follows. Ethanolamine phosphate transferase involved in glycosylphosphatidylinositol-anchor biosynthesis. Transfers ethanolamine phosphate to the first alpha-1,4-linked mannose of the glycosylphosphatidylinositol precursor of GPI-anchor. The sequence is that of GPI ethanolamine phosphate transferase 1 (MCD4) from Kluyveromyces lactis (strain ATCC 8585 / CBS 2359 / DSM 70799 / NBRC 1267 / NRRL Y-1140 / WM37) (Yeast).